The following is a 232-amino-acid chain: Ureidoacrylate amidohydrolase RutB (232 aa).

Residue aspartate 26 is the Proton acceptor of the active site. The active site involves lysine 135. Cysteine 168 (nucleophile) is an active-site residue.

Belongs to the isochorismatase family. RutB subfamily.

It carries out the reaction (Z)-3-ureidoacrylate + H2O + H(+) = (Z)-3-aminoacrylate + NH4(+) + CO2. The catalysed reaction is (Z)-3-ureidoacrylate + H2O = (Z)-3-aminoacrylate + carbamate + H(+). It catalyses the reaction (Z)-2-methylureidoacrylate + H2O + H(+) = (Z)-2-methylaminoacrylate + NH4(+) + CO2. In terms of biological role, hydrolyzes ureidoacrylate to form aminoacrylate and carbamate. The carbamate hydrolyzes spontaneously, thereby releasing one of the nitrogen atoms of the pyrimidine ring as ammonia and one of its carbon atoms as CO2. This chain is Ureidoacrylate amidohydrolase RutB, found in Cronobacter sakazakii (strain ATCC BAA-894) (Enterobacter sakazakii).